A 1058-amino-acid chain; its full sequence is SIT4-associating protein SAP185 (1058 aa).

A Glycyl lysine isopeptide (Lys-Gly) (interchain with G-Cter in ubiquitin) cross-link involves residue lysine 20. Disordered stretches follow at residues threonine 34–glutamate 71, serine 135–glutamate 202, asparagine 513–aspartate 556, cysteine 818–glutamine 862, threonine 873–glutamate 892, and glutamate 934–aspartate 992. Residues aspartate 42–phenylalanine 55 are compositionally biased toward polar residues. Basic and acidic residues-rich tracts occupy residues serine 135–lysine 146 and glutamate 153–glycine 175. Positions glutamate 176 to serine 189 are enriched in acidic residues. Over residues glutamate 190–glutamate 202 the composition is skewed to basic and acidic residues. Composition is skewed to acidic residues over residues glutamate 528–asparagine 546 and glutamate 820–proline 837. Positions glutamine 838–glutamate 861 are enriched in basic and acidic residues. Over residues glutamate 934 to phenylalanine 963 the composition is skewed to polar residues. The segment covering phenylalanine 967–tyrosine 991 has biased composition (basic and acidic residues).

This sequence belongs to the SAPS family. In terms of processing, hyperphosphorylated in the absence of SIT4.

Its function is as follows. Associates with the SIT4 phosphatase in a cell cycle dependent manner. May be directly or indirectly involved in SIT4-dependent functions in budding and in normal G1 cyclin expression. In Saccharomyces cerevisiae (strain ATCC 204508 / S288c) (Baker's yeast), this protein is SIT4-associating protein SAP185 (SAP185).